The sequence spans 136 residues: DNA-binding protein H-NS (136 aa).

Positions 13–67 form a coiled coil; it reads TLRAQARECTLETLEEMLEKLEVVVNERREEDSQAQAEIEERTRKLQQYREMLIA. A DNA-binding region spans residues 113 to 118; sequence QGRTPA.

This sequence belongs to the histone-like protein H-NS family. In terms of assembly, interacts with YmoA in the absence of DNA. Homodimer that oligomerizes on DNA into higher-order complexes that form bridges between disparate regions of DNA compacting it. Interacts with YmoA.

The protein localises to the cytoplasm. It is found in the nucleoid. A DNA-binding protein implicated in transcriptional repression and chromosome organization and compaction. Binds nucleation sites in AT-rich DNA and bridges them, forming higher-order nucleoprotein complexes and condensing the chromosome. As many horizontally transferred genes are AT-rich, it plays a central role in silencing foreign genes. A subset of genes are repressed by H-NS in association with YmoA. Complements a number of hns deficiencies in E.coli; represses the bgl operon, represses hemolysin expression. This chain is DNA-binding protein H-NS, found in Yersinia enterocolitica.